The following is a 56-amino-acid chain: Protein hunchback (56 aa).

3 C2H2-type zinc fingers span residues 1 to 5 (HLRNH), 11 to 33 (FKCDKCSYSCVNKSMLNSHLKSH), and 39 to 56 (FRCSDCAYATKYCHSLKL).

The protein belongs to the hunchback C2H2-type zinc-finger protein family.

It localises to the nucleus. Gap class segmentation protein that controls development of head structures. The sequence is that of Protein hunchback (hb) from Euscelis plebejus (Leafhopper).